The following is a 286-amino-acid chain: Pyridoxal kinase PdxY (286 aa).

Substrate is bound by residues Ser-9 and 44 to 45 (TQ). The ATP site is built by Asp-111, Glu-148, and Lys-181. A substrate-binding site is contributed by Asp-222.

It belongs to the pyridoxine kinase family. PdxY subfamily. Homodimer. The cofactor is Mg(2+).

It catalyses the reaction pyridoxal + ATP = pyridoxal 5'-phosphate + ADP + H(+). The protein operates within cofactor metabolism; pyridoxal 5'-phosphate salvage; pyridoxal 5'-phosphate from pyridoxal: step 1/1. In terms of biological role, pyridoxal kinase involved in the salvage pathway of pyridoxal 5'-phosphate (PLP). Catalyzes the phosphorylation of pyridoxal to PLP. This chain is Pyridoxal kinase PdxY, found in Actinobacillus pleuropneumoniae serotype 5b (strain L20).